The following is a 260-amino-acid chain: Eukaryotic translation initiation factor 3 subunit G-2 (260 aa).

Positions 180–258 (CAVRISNLSE…LILSVEWSKP (79 aa)) constitute an RRM domain.

It belongs to the eIF-3 subunit G family. In terms of assembly, component of the eukaryotic translation initiation factor 3 (eIF-3) complex. The eIF-3 complex interacts with pix.

Its subcellular location is the cytoplasm. Functionally, RNA-binding component of the eukaryotic translation initiation factor 3 (eIF-3) complex, which is involved in protein synthesis of a specialized repertoire of mRNAs and, together with other initiation factors, stimulates binding of mRNA and methionyl-tRNAi to the 40S ribosome. The eIF-3 complex specifically targets and initiates translation of a subset of mRNAs involved in cell proliferation. This subunit can bind 18S rRNA. The protein is Eukaryotic translation initiation factor 3 subunit G-2 of Drosophila grimshawi (Hawaiian fruit fly).